The sequence spans 904 residues: Alanine--tRNA ligase (904 aa).

Positions 594, 598, 695, and 699 each coordinate Zn(2+).

The protein belongs to the class-II aminoacyl-tRNA synthetase family. Zn(2+) serves as cofactor.

Its subcellular location is the cytoplasm. It catalyses the reaction tRNA(Ala) + L-alanine + ATP = L-alanyl-tRNA(Ala) + AMP + diphosphate. In terms of biological role, catalyzes the attachment of alanine to tRNA(Ala) in a two-step reaction: alanine is first activated by ATP to form Ala-AMP and then transferred to the acceptor end of tRNA(Ala). Also edits incorrectly charged Ser-tRNA(Ala) and Gly-tRNA(Ala) via its editing domain. The sequence is that of Alanine--tRNA ligase from Anaeromyxobacter sp. (strain Fw109-5).